Consider the following 207-residue polypeptide: MTSRKKVLLKVIILGDSGVGKTSLMNQYVNKKFSNQYKATIGADFLTKEVMVDDRLVTMQIWDTAGQERFQSLGVAFYRGADCCVLVFDVTAPNTFKTLDSWRDEFLIQASPRDPENFPFVVLGNKIDLENRQVATKRAQAWCYSKNNIPYFETSAKEAINVEQAFQTIARNALKQETEVELYNEFPEPIKLDKNDRAKASAESCSC.

Threonine 2 is modified (N-acetylthreonine). GTP-binding residues include serine 17, glycine 18, valine 19, glycine 20, lysine 21, threonine 22, serine 23, serine 34, asparagine 35, tyrosine 37, and threonine 40. Threonine 22 serves as a coordination point for Mg(2+). The short motif at 28-41 is the Switch 1 element; that stretch reads YVNKKFSNQYKATI. Threonine 40 and aspartate 63 together coordinate Mg(2+). Residue glycine 66 coordinates GTP. The Switch 2 signature appears at 67-82; that stretch reads QERFQSLGVAFYRGAD. Serine 72 bears the Phosphoserine mark. Residues asparagine 125, lysine 126, aspartate 128, alanine 156, and lysine 157 each contribute to the GTP site. Glycyl lysine isopeptide (Lys-Gly) (interchain with G-Cter in ubiquitin) cross-links involve residues lysine 191 and lysine 194. 2 S-geranylgeranyl cysteine lipidation sites follow: cysteine 205 and cysteine 207. A Cysteine methyl ester modification is found at cysteine 207.

The protein belongs to the small GTPase superfamily. Rab family. Interacts with NTRK1/TRKA, RILP, PSMA7, RNF115 and FYCO1. Interacts with the PIK3C3/VPS34-PIK3R4 complex. The GTP-bound form interacts with OSBPL1A and RAC1. Interacts with CLN3. Interacts with CHM, the substrate-binding subunit of the Rab geranylgeranyltransferase complex. Interacts with C9orf72. Does not interact with HPS4 and the BLOC-3 complex (heterodimer of HPS1 and HPS4). Interacts with CLN5. Interacts with PLEKHM1 (via N- and C-terminus). Interacts with PRPH; the interaction is direct. Interacts with VPS13A. The GDP-bound form interacts with RIMOC1. Interacts with the MON1A-CCZ1B complex and this interaction is enhanced in the presence of RIMOC1. Interacts with VPS39 and VPS41. Forms a ternary complex with LAMP2 and RUFY4; the interaction with LAMP2 is mediated by RUFY4 (via RUN and coiled coil domains). Mg(2+) is required as a cofactor. Post-translationally, deubiquitination at Lys-191 and Lys-194 by USP32. Phosphorylated at Ser-72 by LRRK1; phosphorylation is dependent on protein kinase C (PKC) activation of LRRK1. In terms of processing, prenylated. Prenylation is required for association with cellular membranes. As to expression, widely expressed. High expression in liver, heart and kidney. Found in sensory and motor neurons.

Its subcellular location is the cytoplasmic vesicle. It is found in the phagosome membrane. The protein localises to the late endosome membrane. The protein resides in the lysosome membrane. It localises to the melanosome membrane. Its subcellular location is the autophagosome membrane. It is found in the lipid droplet. The protein localises to the endosome membrane. The protein resides in the mitochondrion membrane. It catalyses the reaction GTP + H2O = GDP + phosphate + H(+). Its activity is regulated as follows. Regulated by guanine nucleotide exchange factors (GEFs) which promote the exchange of bound GDP for free GTP. Regulated by GTPase activating proteins (GAPs) which increase the GTP hydrolysis activity. Inhibited by GDP dissociation inhibitors (GDIs). Functionally, the small GTPases Rab are key regulators of intracellular membrane trafficking, from the formation of transport vesicles to their fusion with membranes. Rabs cycle between an inactive GDP-bound form and an active GTP-bound form that is able to recruit to membranes different sets of downstream effectors directly responsible for vesicle formation, movement, tethering and fusion. In its active state, RAB7A binds to a variety of effector proteins playing a key role in the regulation of endo-lysosomal trafficking. Governs early-to-late endosomal maturation, microtubule minus-end as well as plus-end directed endosomal migration and positioning, and endosome-lysosome transport through different protein-protein interaction cascades. Also plays a central role in growth-factor-mediated cell signaling, nutrient-transporter-mediated nutrient uptake, neurotrophin transport in the axons of neurons and lipid metabolism. Also involved in regulation of some specialized endosomal membrane trafficking, such as maturation of melanosomes, pathogen-induced phagosomes (or vacuoles) and autophagosomes. Plays a role in the maturation and acidification of phagosomes that engulf pathogens, such as S.aureus and Mycobacteria. Plays a role in the fusion of phagosomes with lysosomes. In concert with RAC1, plays a role in regulating the formation of RBs (ruffled borders) in osteoclasts. Controls the endosomal trafficking and neurite outgrowth signaling of NTRK1/TRKA. Regulates the endocytic trafficking of the EGF-EGFR complex by regulating its lysosomal degradation. Involved in the ADRB2-stimulated lipolysis through lipophagy, a cytosolic lipase-independent autophagic pathway. Required for the exosomal release of SDCBP, CD63 and syndecan. Required for vesicular trafficking and cell surface expression of ACE2. May play a role in PRPH neuronal intermediate filament assembly. The protein is Ras-related protein Rab-7a of Mus musculus (Mouse).